The following is a 393-amino-acid chain: NAD(P)H-quinone oxidoreductase subunit H, chloroplastic (393 aa).

It belongs to the complex I 49 kDa subunit family. In terms of assembly, NDH is composed of at least 16 different subunits, 5 of which are encoded in the nucleus.

It is found in the plastid. The protein resides in the chloroplast thylakoid membrane. It catalyses the reaction a plastoquinone + NADH + (n+1) H(+)(in) = a plastoquinol + NAD(+) + n H(+)(out). The catalysed reaction is a plastoquinone + NADPH + (n+1) H(+)(in) = a plastoquinol + NADP(+) + n H(+)(out). In terms of biological role, NDH shuttles electrons from NAD(P)H:plastoquinone, via FMN and iron-sulfur (Fe-S) centers, to quinones in the photosynthetic chain and possibly in a chloroplast respiratory chain. The immediate electron acceptor for the enzyme in this species is believed to be plastoquinone. Couples the redox reaction to proton translocation, and thus conserves the redox energy in a proton gradient. The sequence is that of NAD(P)H-quinone oxidoreductase subunit H, chloroplastic from Morus indica (Mulberry).